The chain runs to 485 residues: Probable glycine dehydrogenase (decarboxylating) subunit 2 (485 aa).

At Lys269 the chain carries N6-(pyridoxal phosphate)lysine.

Belongs to the GcvP family. C-terminal subunit subfamily. In terms of assembly, the glycine cleavage system is composed of four proteins: P, T, L and H. In this organism, the P 'protein' is a heterodimer of two subunits. It depends on pyridoxal 5'-phosphate as a cofactor.

It carries out the reaction N(6)-[(R)-lipoyl]-L-lysyl-[glycine-cleavage complex H protein] + glycine + H(+) = N(6)-[(R)-S(8)-aminomethyldihydrolipoyl]-L-lysyl-[glycine-cleavage complex H protein] + CO2. Functionally, the glycine cleavage system catalyzes the degradation of glycine. The P protein binds the alpha-amino group of glycine through its pyridoxal phosphate cofactor; CO(2) is released and the remaining methylamine moiety is then transferred to the lipoamide cofactor of the H protein. This is Probable glycine dehydrogenase (decarboxylating) subunit 2 from Chlorobium phaeovibrioides (strain DSM 265 / 1930) (Prosthecochloris vibrioformis (strain DSM 265)).